A 57-amino-acid polypeptide reads, in one-letter code: Small ribosomal subunit protein bS21 (57 aa).

The segment at 35–57 is disordered; it reads REFYEKPSVRRKKKSEAARKRKY. A compositionally biased stretch (basic residues) spans 43-57; sequence VRRKKKSEAARKRKY.

Belongs to the bacterial ribosomal protein bS21 family.

In Bacillus licheniformis (strain ATCC 14580 / DSM 13 / JCM 2505 / CCUG 7422 / NBRC 12200 / NCIMB 9375 / NCTC 10341 / NRRL NRS-1264 / Gibson 46), this protein is Small ribosomal subunit protein bS21.